We begin with the raw amino-acid sequence, 372 residues long: sn-glycerol-3-phosphate import ATP-binding protein UgpC (372 aa).

Positions 2–233 constitute an ABC transporter domain; sequence LDIQQLVKTY…PASTFVASFI (232 aa). 35–42 provides a ligand contact to ATP; it reads GPSGCGKS.

The protein belongs to the ABC transporter superfamily. sn-glycerol-3-phosphate importer (TC 3.A.1.1.3) family. As to quaternary structure, the complex is composed of two ATP-binding proteins (UgpC), two transmembrane proteins (UgpA and UgpE) and a solute-binding protein (UgpB).

Its subcellular location is the cell inner membrane. The enzyme catalyses sn-glycerol 3-phosphate(out) + ATP + H2O = sn-glycerol 3-phosphate(in) + ADP + phosphate + H(+). Its function is as follows. Part of the ABC transporter complex UgpBAEC involved in sn-glycerol-3-phosphate (G3P) import. Responsible for energy coupling to the transport system. This Vibrio vulnificus (strain CMCP6) protein is sn-glycerol-3-phosphate import ATP-binding protein UgpC.